We begin with the raw amino-acid sequence, 1237 residues long: GTPase activating protein BUD2 (1237 aa).

Positions 79–110 (GSGKSSISQPPPTTSTRRNLLRKSSNLNSSDQ) are enriched in low complexity. Residues 79 to 124 (GSGKSSISQPPPTTSTRRNLLRKSSNLNSSDQSHSKSSEDNEHQPP) are disordered. A compositionally biased stretch (basic and acidic residues) spans 111–121 (SHSKSSEDNEH). One can recognise a C2 domain in the interval 381-503 (NVEHPQLYDF…KQIKTTSTIM (123 aa)). In terms of domain architecture, Ras-GAP spans 637 to 905 (NSQDQAVSNS…PEIYDYFDKL (269 aa)). Disordered stretches follow at residues 721 to 762 (SIHE…ERER) and 969 to 1007 (NNNGSMSNLGTPVNSPSRDMEREQDRSRSRSQSGTPDLD). A compositionally biased stretch (acidic residues) spans 735 to 754 (DVSDDDDDDDDNSSDDDADY). Basic and acidic residues predominate over residues 986–996 (RDMEREQDRSR). The stretch at 1065–1093 (NITLKDIQKQSTKIMNKIQELEIYLENYE) forms a coiled coil. The segment at 1170–1204 (NGGMGNRNGHDVNGHNNNNNNNNNNTGDGYNETDR) is disordered. A compositionally biased stretch (low complexity) spans 1183–1199 (GHNNNNNNNNNNTGDGY).

The protein localises to the cytoplasm. It localises to the cell cortex. The protein resides in the cell tip. Its subcellular location is the cell septum. GTPase activating protein (GAP) for RSR1 which is involved in the polarization of yeast and hyphal cells. Directs the site of new daughter cell growth in yeast and hyphal cells. Important for hyphae to maintain linear growth and necessary for hyphal responses to directional cues in the environment (tropisms). Required for correct localization of the septin rings and stabilization of the polarisome at hyphal tips. Involved in cell adhesion. The protein is GTPase activating protein BUD2 (BUD2) of Candida albicans (strain SC5314 / ATCC MYA-2876) (Yeast).